The primary structure comprises 1251 residues: ATP-dependent helicase/nuclease subunit A (1251 aa).

The region spanning 5 to 481 is the UvrD-like helicase ATP-binding domain; that stretch reads TKWTDEQWEA…IILSRNFRSR (477 aa). 26–33 is a binding site for ATP; it reads AAAGAGKT. The 299-residue stretch at 526-824 folds into the UvrD-like helicase C-terminal domain; it reads TVGGEVEFHL…RIMSIHKSKG (299 aa). Positions 544-565 are disordered; it reads NFTFENEGEEGRQADEGEEDEE.

This sequence belongs to the helicase family. AddA subfamily. In terms of assembly, heterodimer of AddA and AddB/RexB. Mg(2+) is required as a cofactor.

The catalysed reaction is Couples ATP hydrolysis with the unwinding of duplex DNA by translocating in the 3'-5' direction.. It catalyses the reaction ATP + H2O = ADP + phosphate + H(+). Its function is as follows. The heterodimer acts as both an ATP-dependent DNA helicase and an ATP-dependent, dual-direction single-stranded exonuclease. Recognizes the chi site generating a DNA molecule suitable for the initiation of homologous recombination. The AddA nuclease domain is required for chi fragment generation; this subunit has the helicase and 3' -&gt; 5' nuclease activities. This Acetivibrio thermocellus (strain ATCC 27405 / DSM 1237 / JCM 9322 / NBRC 103400 / NCIMB 10682 / NRRL B-4536 / VPI 7372) (Clostridium thermocellum) protein is ATP-dependent helicase/nuclease subunit A.